Reading from the N-terminus, the 226-residue chain is ATP synthase F(0) complex subunit a (226 aa).

The next 6 helical transmembrane spans lie at 12 to 32, 68 to 88, 97 to 117, 138 to 158, 182 to 202, and 203 to 223; these read PTVL…LLIP, WSLM…LGLL, QLSM…AMGL, IPML…ALAV, LAIN…LTIL, and ETAI…LYLH.

The protein belongs to the ATPase A chain family. As to quaternary structure, component of the ATP synthase complex composed at least of ATP5F1A/subunit alpha, ATP5F1B/subunit beta, ATP5MC1/subunit c (homooctomer), MT-ATP6/subunit a, MT-ATP8/subunit 8, ATP5ME/subunit e, ATP5MF/subunit f, ATP5MG/subunit g, ATP5MK/subunit k, ATP5MJ/subunit j, ATP5F1C/subunit gamma, ATP5F1D/subunit delta, ATP5F1E/subunit epsilon, ATP5PF/subunit F6, ATP5PB/subunit b, ATP5PD/subunit d, ATP5PO/subunit OSCP. ATP synthase complex consists of a soluble F(1) head domain (subunits alpha(3) and beta(3)) - the catalytic core - and a membrane F(0) domain - the membrane proton channel (subunits c, a, 8, e, f, g, k and j). These two domains are linked by a central stalk (subunits gamma, delta, and epsilon) rotating inside the F1 region and a stationary peripheral stalk (subunits F6, b, d, and OSCP). Interacts with DNAJC30; interaction is direct.

Its subcellular location is the mitochondrion inner membrane. The catalysed reaction is H(+)(in) = H(+)(out). Its function is as follows. Subunit a, of the mitochondrial membrane ATP synthase complex (F(1)F(0) ATP synthase or Complex V) that produces ATP from ADP in the presence of a proton gradient across the membrane which is generated by electron transport complexes of the respiratory chain. ATP synthase complex consist of a soluble F(1) head domain - the catalytic core - and a membrane F(1) domain - the membrane proton channel. These two domains are linked by a central stalk rotating inside the F(1) region and a stationary peripheral stalk. During catalysis, ATP synthesis in the catalytic domain of F(1) is coupled via a rotary mechanism of the central stalk subunits to proton translocation. With the subunit c (ATP5MC1), forms the proton-conducting channel in the F(0) domain, that contains two crucial half-channels (inlet and outlet) that facilitate proton movement from the mitochondrial intermembrane space (IMS) into the matrix. Protons are taken up via the inlet half-channel and released through the outlet half-channel, following a Grotthuss mechanism. This is ATP synthase F(0) complex subunit a from Pongo abelii (Sumatran orangutan).